Here is a 279-residue protein sequence, read N- to C-terminus: tRNA (carboxymethyluridine(34)-5-O)-methyltransferase (279 aa).

Residues 172–236 (KSKSKPKTKS…QQQDQEQERE (65 aa)) form a disordered region. A compositionally biased stretch (basic and acidic residues) spans 200 to 229 (PKERSEYLQRWKEEQQRSKSLDDNDEKQQQ).

As to quaternary structure, interacts with TRM112.

It is found in the cytoplasm. Its subcellular location is the nucleus. It carries out the reaction 5-(carboxymethyl)uridine(34) in tRNA + S-adenosyl-L-methionine = 5-(2-methoxy-2-oxoethyl)uridine(34) in tRNA + S-adenosyl-L-homocysteine. In terms of biological role, required for the methylation of the wobble bases at position 34 in tRNA. Appears to have a role in stress-response. The sequence is that of tRNA (carboxymethyluridine(34)-5-O)-methyltransferase (TRM9) from Saccharomyces cerevisiae (strain ATCC 204508 / S288c) (Baker's yeast).